The sequence spans 599 residues: Sulfite reductase [NADPH] flavoprotein alpha-component (599 aa).

A Flavodoxin-like domain is found at 63–201 (ITVISASQTG…LATAWRKQVV (139 aa)). Residues 69–74 (SQTGNA), 116–119 (STQG), and 152–161 (LGDTSYENFC) each bind FMN. One can recognise an FAD-binding FR-type domain in the interval 234 to 448 (EQPLTAQLAV…IEHNDNFRLP (215 aa)). FAD contacts are provided by residues T322, H356, 386 to 389 (RLYS), 404 to 406 (TVG), Y410, and 419 to 422 (GGAS). NADP(+)-binding positions include 519 to 520 (SR), 525 to 529 (KVYVQ), and D561. Y599 serves as a coordination point for FAD.

Belongs to the NADPH-dependent sulphite reductase flavoprotein subunit CysJ family. It in the N-terminal section; belongs to the flavodoxin family. This sequence in the C-terminal section; belongs to the flavoprotein pyridine nucleotide cytochrome reductase family. Alpha(8)-beta(8). The alpha component is a flavoprotein, the beta component is a hemoprotein. FAD is required as a cofactor. Requires FMN as cofactor.

The catalysed reaction is hydrogen sulfide + 3 NADP(+) + 3 H2O = sulfite + 3 NADPH + 4 H(+). Its pathway is sulfur metabolism; hydrogen sulfide biosynthesis; hydrogen sulfide from sulfite (NADPH route): step 1/1. Component of the sulfite reductase complex that catalyzes the 6-electron reduction of sulfite to sulfide. This is one of several activities required for the biosynthesis of L-cysteine from sulfate. The flavoprotein component catalyzes the electron flow from NADPH -&gt; FAD -&gt; FMN to the hemoprotein component. This chain is Sulfite reductase [NADPH] flavoprotein alpha-component, found in Serratia proteamaculans (strain 568).